The chain runs to 319 residues: N-acyl-aromatic-L-amino acid amidohydrolase (carboxylate-forming) (319 aa).

Residues 1–210 (MCSLPVPREP…TVLDFIELFN (210 aa)) form a hydrolytic domain region. Positions 21 and 24 each coordinate Zn(2+). Substrate is bound by residues arginine 63 and 70–71 (NR). Residue histidine 116 participates in Zn(2+) binding. Glutamate 178 and tyrosine 288 together coordinate substrate. The segment at 211–318 (QGTAFPAFEM…PALTPAPSPA (108 aa)) is shielding domain.

It belongs to the AspA/AstE family. Aspartoacylase subfamily. In terms of assembly, exists as a mixture of homodimers and homotetramer, both catalytically active. (Microbial infection) Interacts with hepatitis C virus/HCV core protein. Zn(2+) is required as a cofactor.

The protein localises to the apical cell membrane. Its subcellular location is the cytoplasm. The catalysed reaction is an N-acyl-aromatic L-alpha-amino acid + H2O = an aromatic L-alpha-amino acid + a carboxylate. It carries out the reaction an N-acetyl-L-cysteine-S-conjugate + H2O = an S-substituted L-cysteine + acetate. Plays an important role in deacetylating mercapturic acids in kidney proximal tubules. Also acts on N-acetyl-aromatic amino acids. This is N-acyl-aromatic-L-amino acid amidohydrolase (carboxylate-forming) (ACY3) from Homo sapiens (Human).